Here is a 388-residue protein sequence, read N- to C-terminus: Flap endonuclease 1 (388 aa).

Residues 1–104 (MGILGLSKLI…GELAKRAERR (104 aa)) form an N-domain region. Asp-34 contacts Mg(2+). DNA is bound by residues Arg-47 and Arg-70. Mg(2+) is bound by residues Asp-86, Glu-158, Glu-160, Asp-179, and Asp-181. The I-domain stretch occupies residues 122–253 (EIEKFNRRLV…KRAIELINNY (132 aa)). Glu-158 contacts DNA. DNA contacts are provided by Gly-231 and Asp-233. Asp-233 provides a ligand contact to Mg(2+). An interaction with PCNA region spans residues 336–344 (TQVRLDSFF). A disordered region spans residues 343–388 (FFKTLPSTPSATNAAKRKAEEAKKSANNKKAKTSGGGGGGRGRRPK).

The protein belongs to the XPG/RAD2 endonuclease family. FEN1 subfamily. Interacts with PCNA. Three molecules of FEN1 bind to one PCNA trimer with each molecule binding to one PCNA monomer. PCNA stimulates the nuclease activity without altering cleavage specificity. It depends on Mg(2+) as a cofactor. Phosphorylated. Phosphorylation upon DNA damage induces relocalization to the nuclear plasma.

Its subcellular location is the nucleus. It localises to the nucleolus. The protein resides in the nucleoplasm. The protein localises to the mitochondrion. Structure-specific nuclease with 5'-flap endonuclease and 5'-3' exonuclease activities involved in DNA replication and repair. During DNA replication, cleaves the 5'-overhanging flap structure that is generated by displacement synthesis when DNA polymerase encounters the 5'-end of a downstream Okazaki fragment. It enters the flap from the 5'-end and then tracks to cleave the flap base, leaving a nick for ligation. Also involved in the long patch base excision repair (LP-BER) pathway, by cleaving within the apurinic/apyrimidinic (AP) site-terminated flap. Acts as a genome stabilization factor that prevents flaps from equilibrating into structures that lead to duplications and deletions. Also possesses 5'-3' exonuclease activity on nicked or gapped double-stranded DNA, and exhibits RNase H activity. Also involved in replication and repair of rDNA and in repairing mitochondrial DNA. The polypeptide is Flap endonuclease 1 (Drosophila ananassae (Fruit fly)).